Here is a 610-residue protein sequence, read N- to C-terminus: Elongation factor 4 (610 aa).

The 183-residue stretch at 12–194 (EKIRNFSIIA…QIVEKVPAPQ (183 aa)) folds into the tr-type G domain. Residues 24–29 (DHGKST) and 141–144 (NKID) each bind GTP.

Belongs to the TRAFAC class translation factor GTPase superfamily. Classic translation factor GTPase family. LepA subfamily.

The protein resides in the cell membrane. The catalysed reaction is GTP + H2O = GDP + phosphate + H(+). In terms of biological role, required for accurate and efficient protein synthesis under certain stress conditions. May act as a fidelity factor of the translation reaction, by catalyzing a one-codon backward translocation of tRNAs on improperly translocated ribosomes. Back-translocation proceeds from a post-translocation (POST) complex to a pre-translocation (PRE) complex, thus giving elongation factor G a second chance to translocate the tRNAs correctly. Binds to ribosomes in a GTP-dependent manner. The sequence is that of Elongation factor 4 from Streptococcus thermophilus (strain CNRZ 1066).